Consider the following 244-residue polypeptide: Type III pantothenate kinase (244 aa).

ATP is bound at residue 9–16 (DAGNSSLK). Substrate contacts are provided by residues tyrosine 90 and 97-100 (GVDR). The Proton acceptor role is filled by aspartate 99. Threonine 122 is a binding site for ATP. Threonine 172 is a binding site for substrate.

It belongs to the type III pantothenate kinase family. In terms of assembly, homodimer. Requires NH4(+) as cofactor. The cofactor is K(+).

The protein resides in the cytoplasm. It carries out the reaction (R)-pantothenate + ATP = (R)-4'-phosphopantothenate + ADP + H(+). Its pathway is cofactor biosynthesis; coenzyme A biosynthesis; CoA from (R)-pantothenate: step 1/5. In terms of biological role, catalyzes the phosphorylation of pantothenate (Pan), the first step in CoA biosynthesis. The polypeptide is Type III pantothenate kinase (Thiobacillus denitrificans (strain ATCC 25259 / T1)).